Reading from the N-terminus, the 296-residue chain is N-acetylmuramic acid 6-phosphate etherase (296 aa).

Positions 54–217 (VTESFRKGGR…STTSMVGIGK (164 aa)) constitute an SIS domain. Glu-82 functions as the Proton donor in the catalytic mechanism. Residue Glu-113 is part of the active site.

Belongs to the GCKR-like family. MurNAc-6-P etherase subfamily. In terms of assembly, homodimer.

The enzyme catalyses N-acetyl-D-muramate 6-phosphate + H2O = N-acetyl-D-glucosamine 6-phosphate + (R)-lactate. Its pathway is amino-sugar metabolism; N-acetylmuramate degradation. Specifically catalyzes the cleavage of the D-lactyl ether substituent of MurNAc 6-phosphate, producing GlcNAc 6-phosphate and D-lactate. The protein is N-acetylmuramic acid 6-phosphate etherase of Listeria welshimeri serovar 6b (strain ATCC 35897 / DSM 20650 / CCUG 15529 / CIP 8149 / NCTC 11857 / SLCC 5334 / V8).